Here is a 320-residue protein sequence, read N- to C-terminus: Beta-sarcoglycan (320 aa).

Positions 1–10 (MAAAAAAAAA) are enriched in low complexity. Positions 1–34 (MAAAAAAAAATEQQSSNGPVKKSMREKAVERRNV) are disordered. Topologically, residues 1-67 (MAAAAAAAAA…GLRGRKGNLA (67 aa)) are cytoplasmic. Residues 23 to 34 (SMREKAVERRNV) are compositionally biased toward basic and acidic residues. The chain crosses the membrane as a helical; Signal-anchor for type II membrane protein span at residues 68–88 (ICVIVLLFILAVINLLITLVI). At 89 to 320 (WAVIRIGPNG…VADNPCGNTH (232 aa)) the chain is on the extracellular side. N-linked (GlcNAc...) asparagine glycans are attached at residues Asn-160, Asn-213, and Asn-260. Disulfide bonds link Cys-290-Cys-316 and Cys-292-Cys-309.

Belongs to the sarcoglycan beta/delta/gamma/zeta family. As to quaternary structure, cross-link to form 2 major subcomplexes: one consisting of SGCB, SGCD and SGCG and the other consisting of SGCB and SGCD. The association between SGCB and SGCG is particularly strong while SGCA is loosely associated with the other sarcoglycans. Disulfide bonds are present.

It localises to the cell membrane. Its subcellular location is the sarcolemma. It is found in the cytoplasm. The protein resides in the cytoskeleton. In terms of biological role, component of the sarcoglycan complex, a subcomplex of the dystrophin-glycoprotein complex which forms a link between the F-actin cytoskeleton and the extracellular matrix. The sequence is that of Beta-sarcoglycan (SGCB) from Mesocricetus auratus (Golden hamster).